The following is a 179-amino-acid chain: Cellular nucleic acid-binding protein homolog (179 aa).

7 CCHC-type zinc fingers span residues 17 to 34 (PRCY…ECTK), 36 to 53 (SICY…ECTE), 58 to 75 (KTCY…DCPS), 83 to 100 (AECY…DCRT), 116 to 133 (MNCY…DCTM), 135 to 152 (VKCY…ECQQ), and 157 to 174 (QLCY…NCTS).

It to human CNBP and to retroviral nucleic acid binding proteins (NBP). Phosphorylated.

The protein resides in the nucleus. In terms of biological role, acts in the sexual differentiation pathway. Is required for efficient conjugation. Double-stranded DNA-binding protein. This chain is Cellular nucleic acid-binding protein homolog (byr3), found in Schizosaccharomyces pombe (strain 972 / ATCC 24843) (Fission yeast).